Reading from the N-terminus, the 622-residue chain is Mitochondrial Rho GTPase 2 (622 aa).

At 1–596 (MRRDVRILLL…ELHPTPFWLR (596 aa)) the chain is on the cytoplasmic side. The Miro 1 domain occupies 2–168 (RRDVRILLLG…FYYAQKAVLH (167 aa)). GTP is bound by residues Gly-16, Lys-17, Thr-18, and Ser-19. A Mg(2+)-binding site is contributed by Thr-18. Asp-57 contacts Mg(2+). GTP is bound at residue Ser-59. Lys-96 participates in a covalent cross-link: Glycyl lysine isopeptide (Lys-Gly) (interchain with G-Cter in ubiquitin). 5 residues coordinate GTP: Asn-118, Lys-119, Asp-121, Ala-149, and Lys-150. A Glycyl lysine isopeptide (Lys-Gly) (interchain with G-Cter in ubiquitin) cross-link involves residue Lys-119. Residue Lys-164 forms a Glycyl lysine isopeptide (Lys-Gly) (interchain with G-Cter in ubiquitin) linkage. EF-hand domains are found at residues 184-219 (ACAQ…CFGH) and 304-339 (RGYQ…FSVA). Positions 197, 199, 201, 208, 317, 319, 321, and 328 each coordinate Ca(2+). The Miro 2 domain occupies 415-580 (RSVLMCKVLG…FTQLATMATF (166 aa)). Positions 427, 429, 430, 431, and 432 each coordinate GTP. Position 431 (Ser-431) interacts with Mg(2+). Residue Glu-475 coordinates Mg(2+). Positions 529, 531, and 560 each coordinate GTP. The helical; Anchor for type IV membrane protein transmembrane segment at 597-619 (GVLVAVGTAVAAVLSFSLYRVLV) threads the bilayer. Topologically, residues 620–622 (KSR) are mitochondrial intermembrane.

This sequence belongs to the mitochondrial Rho GTPase family. As to quaternary structure, homodimer. Interacts with the kinesin-binding proteins TRAK1/OIP106 and TRAK2/GRIF1, forming a link between mitochondria and the trafficking apparatus of the microtubules. Interacts with ARMCX3. Found in a complex with KIF5B, OGT, RHOT1 and TRAK1. In terms of processing, ubiquitinated by PRKN in a PINK1-dependent manner, leading to its degradation.

It is found in the mitochondrion outer membrane. It catalyses the reaction GTP + H2O = GDP + phosphate + H(+). The enzyme catalyses ATP + H2O = ADP + phosphate + H(+). The catalysed reaction is UTP + H2O = UDP + phosphate + H(+). Functionally, atypical mitochondrial nucleoside-triphosphatase (NTPase) involved in mitochondrial trafficking. Probably involved in control of anterograde transport of mitochondria and their subcellular distribution. Can hydrolyze GTP, ATP and UTP. The polypeptide is Mitochondrial Rho GTPase 2 (Rhot2) (Rattus norvegicus (Rat)).